The following is a 55-amino-acid chain: uncharacterized protein (55 aa).

Residues 24-46 form a helical membrane-spanning segment; that stretch reads LFIIFFTYSYYYCGFLQSFNYII.

The protein resides in the membrane. This is an uncharacterized protein from Dictyostelium discoideum (Social amoeba).